The primary structure comprises 151 residues: uncharacterized protein (151 aa).

The tract at residues 89–151 is disordered; that stretch reads MNKVKDLRDR…AQKQAEQLNR (63 aa). Composition is skewed to basic and acidic residues over residues 91–105 and 112–151; these read KVKD…DKTD and DMRE…QLNR.

It to C.plantagineum desiccation-related protein clone PCC3-06.

This is an uncharacterized protein from Bacillus subtilis (strain 168).